Reading from the N-terminus, the 259-residue chain is Emerin (259 aa).

Methionine 1 is modified (N-acetylmethionine). The 45-residue stretch at 1–45 (MDDYAVLSDTELAAVLRQYNIPHGPIVGSTRKLYEKKIFEYETQR) folds into the LEM domain. Serine 8, serine 29, serine 54, serine 72, serine 88, serine 99, serine 141, and serine 142 each carry phosphoserine. The interval 46 to 223 (RRLLPPNSSS…PAAALGQDRQ (178 aa)) is interaction with F-actin. The residue at position 161 (tyrosine 161) is a Phosphotyrosine. Positions 168–187 (RPISNVSRSSLGLSYYPTSS) are interaction with CTNNB1. Residues serine 171, serine 174, and serine 176 each carry the phosphoserine modification. Residues 224–244 (VPLWGQLLLFLVFAAFLLFVY) traverse the membrane as a helical segment.

Interacts with lamins A and C, BANF1, GMCL, BCLAF1 and YTHDC1/YT521. Interacts with TMEM43; the interaction retains emerin in the inner nuclear membrane. Interacts with ACTB, SPTAN1, F-actin, CTNNB1 and beta-tubulin. Interacts with SUN1 and SUN2. Interacts with TMEM201. Interacts with NEMP1. In the ovary, highest expression is seen in primordial follicle oocytes (at protein level). Detected in embryonic fibroblasts, skeletal muscle, heart muscle and tongue epithelium (at protein level). Widely expressed.

The protein resides in the nucleus inner membrane. It is found in the nucleus outer membrane. Stabilizes and promotes the formation of a nuclear actin cortical network. Stimulates actin polymerization in vitro by binding and stabilizing the pointed end of growing filaments. Inhibits beta-catenin activity by preventing its accumulation in the nucleus. Acts by influencing the nuclear accumulation of beta-catenin through a CRM1-dependent export pathway. Links centrosomes to the nuclear envelope via a microtubule association. Required for proper localization of non-farnesylated prelamin-A/C. Together with NEMP1, contributes to nuclear envelope stiffness in germ cells. This Mus musculus (Mouse) protein is Emerin (Emd).